We begin with the raw amino-acid sequence, 785 residues long: MEASSWLCYQARGFGSSRVWLWLLLALVLLNCSLVLSASPYLVGMGSFDITGPAADVNMMGYANTEQIASGIHFRLKSRAFIVAEPNGKRVVFVNIDACMASQIVTIKVLERLKARYGDLYNENNVAISGIHTHAGPGGYLQYVVYIVTSLGFVRQSFDVIVDGIEQSIVEAHNNLRPGKIFVNKGDLLDAGVNRSPSAYLNNPAEERSKYEYNVDKEMTLIKFVDDELGPVGSFNWFATHGTSMSRTNSLISGDNKGAAARFMEDWAEQMGLPKQSAHANSDDLRSLHKTSVLPRRVSTIIPEPNEITDDLIQLASSYEASGGRRLAGSSITRRIRSTQQNKPKFVSAFCQSNCGDVSPNVLGTFCIDTNLPCDFNHSTCNGKNELCYGRGPGYPDEFESTRVIGNRQFLKARDLFDSASEEIQGKIDYRHTYLDFSKLEVKVSTSAGGQQTVKTCPAAMGFAFAAGTTDGPGAFDFRQGDVKGNPFWKLVRNLLKTPGKDQVECHSPKPILLDTGEMKEPYDWAPAILPVQMIRIGQLVILCVPGEFTTMAGRRLRDAVKTVLTSGNSEFDKNIHVVLAGLTNSYSQYITTFEEYQIQRYEGASTLYGPHTLSAYIQEFQKLAMAMIANKEVPTNFQPPDMLDKQIGLLPGVVFDSTPLGVKFGDVNSDVPGNSTFNKGSTVNATFYSACPRNDLLTDGTFALVEKLDGNNNWVPVYDDDDWSLRFKWSRPARLSSRSFATLEWTVPEDAAAGVYRLRHFGASKPMFGSVRHFTGTSRAFAVR.

The signal sequence occupies residues 1–35 (MEASSWLCYQARGFGSSRVWLWLLLALVLLNCSLV). Asparagine 31 is a glycosylation site (N-linked (GlcNAc...) asparagine). Catalysis depends on serine 359, which acts as the Nucleophile. Asparagine 377, asparagine 675, and asparagine 685 each carry an N-linked (GlcNAc...) asparagine glycan.

Belongs to the neutral ceramidase family. Expressed in seedlings, with higher levels in roots than in shoots.

It localises to the secreted. Its subcellular location is the endoplasmic reticulum. It is found in the golgi apparatus. The enzyme catalyses an N-acylsphing-4-enine + H2O = sphing-4-enine + a fatty acid. Enhanced activity in the presence of calcium, magnesium, manganese and zinc ions, but inhibited activity in the presence of iron ion. In terms of biological role, hydrolyzes the sphingolipid ceramide into sphingosine and free fatty acid. Uses ceramide instead of phytoceramide as substrate. The polypeptide is Neutral ceramidase (Oryza sativa subsp. japonica (Rice)).